A 688-amino-acid chain; its full sequence is Glycine--tRNA ligase beta subunit (688 aa).

It belongs to the class-II aminoacyl-tRNA synthetase family. As to quaternary structure, tetramer of two alpha and two beta subunits.

It localises to the cytoplasm. It catalyses the reaction tRNA(Gly) + glycine + ATP = glycyl-tRNA(Gly) + AMP + diphosphate. The chain is Glycine--tRNA ligase beta subunit from Shewanella sp. (strain MR-4).